The chain runs to 685 residues: Galactocerebrosidase (685 aa).

Residues 1 to 42 (MAEWLLSASRQRRVKAMTAAAGSAGRAAVPFLLCALLAPGGA) form the signal peptide. Thr109 is a binding site for substrate. Asn143 carries an N-linked (GlcNAc...) asparagine glycan. Positions 151 and 197 each coordinate substrate. Glu198 serves as the catalytic Proton donor/acceptor. The Nucleophile role is filled by Glu274. An intrachain disulfide couples Cys287 to Cys394. Asn379 carries N-linked (GlcNAc...) asparagine glycosylation. Position 396 (Arg396) interacts with substrate. N-linked (GlcNAc...) asparagine glycans are attached at residues Asn403, Asn451, Asn556, Asn559, and Asn602.

This sequence belongs to the glycosyl hydrolase 59 family.

It localises to the lysosome. The enzyme catalyses a beta-D-galactosyl-(1&lt;-&gt;1')-N-acylsphing-4-enine + H2O = an N-acylsphing-4-enine + D-galactose. The catalysed reaction is beta-D-galactosyl-(1&lt;-&gt;1)-sphing-4-enine + H2O = sphing-4-enine + D-galactose. It catalyses the reaction a D-galactosylceramide + H2O = an N-acyl-sphingoid base + D-galactose. In terms of biological role, hydrolyzes the galactose ester bonds of glycolipids such as galactosylceramide and galactosylsphingosine. Enzyme with very low activity responsible for the lysosomal catabolism of galactosylceramide, a major lipid in myelin, kidney and epithelial cells of small intestine and colon. The protein is Galactocerebrosidase of Macaca mulatta (Rhesus macaque).